We begin with the raw amino-acid sequence, 627 residues long: DNA mismatch repair protein MutL (627 aa).

Residues F363–Y397 are disordered. The span at A364–A387 shows a compositional bias: low complexity.

The protein belongs to the DNA mismatch repair MutL/HexB family.

This protein is involved in the repair of mismatches in DNA. It is required for dam-dependent methyl-directed DNA mismatch repair. May act as a 'molecular matchmaker', a protein that promotes the formation of a stable complex between two or more DNA-binding proteins in an ATP-dependent manner without itself being part of a final effector complex. The protein is DNA mismatch repair protein MutL of Shigella flexneri serotype 5b (strain 8401).